The sequence spans 363 residues: UDP-N-acetylglucosamine--N-acetylmuramyl-(pentapeptide) pyrophosphoryl-undecaprenol N-acetylglucosamine transferase (363 aa).

UDP-N-acetyl-alpha-D-glucosamine contacts are provided by residues 14 to 16 (TGG), asparagine 122, arginine 163, serine 190, and glutamine 285.

This sequence belongs to the glycosyltransferase 28 family. MurG subfamily.

The protein localises to the cell inner membrane. The catalysed reaction is di-trans,octa-cis-undecaprenyl diphospho-N-acetyl-alpha-D-muramoyl-L-alanyl-D-glutamyl-meso-2,6-diaminopimeloyl-D-alanyl-D-alanine + UDP-N-acetyl-alpha-D-glucosamine = di-trans,octa-cis-undecaprenyl diphospho-[N-acetyl-alpha-D-glucosaminyl-(1-&gt;4)]-N-acetyl-alpha-D-muramoyl-L-alanyl-D-glutamyl-meso-2,6-diaminopimeloyl-D-alanyl-D-alanine + UDP + H(+). It functions in the pathway cell wall biogenesis; peptidoglycan biosynthesis. Cell wall formation. Catalyzes the transfer of a GlcNAc subunit on undecaprenyl-pyrophosphoryl-MurNAc-pentapeptide (lipid intermediate I) to form undecaprenyl-pyrophosphoryl-MurNAc-(pentapeptide)GlcNAc (lipid intermediate II). The polypeptide is UDP-N-acetylglucosamine--N-acetylmuramyl-(pentapeptide) pyrophosphoryl-undecaprenol N-acetylglucosamine transferase (Prochlorococcus marinus (strain AS9601)).